A 387-amino-acid chain; its full sequence is Erythronate-4-phosphate dehydrogenase (387 aa).

Ser45 and Thr67 together coordinate substrate. Asp147 is a binding site for NAD(+). Residue Arg208 is part of the active site. Asp232 lines the NAD(+) pocket. Residue Glu237 is part of the active site. The active-site Proton donor is the His254. Gly257 is a binding site for NAD(+). Tyr258 contacts substrate.

This sequence belongs to the D-isomer specific 2-hydroxyacid dehydrogenase family. PdxB subfamily. Homodimer.

The protein resides in the cytoplasm. The enzyme catalyses 4-phospho-D-erythronate + NAD(+) = (R)-3-hydroxy-2-oxo-4-phosphooxybutanoate + NADH + H(+). It functions in the pathway cofactor biosynthesis; pyridoxine 5'-phosphate biosynthesis; pyridoxine 5'-phosphate from D-erythrose 4-phosphate: step 2/5. Catalyzes the oxidation of erythronate-4-phosphate to 3-hydroxy-2-oxo-4-phosphonooxybutanoate. This chain is Erythronate-4-phosphate dehydrogenase, found in Shewanella woodyi (strain ATCC 51908 / MS32).